The primary structure comprises 295 residues: HTH-type transcriptional regulator TrpI (295 aa).

Residues 6–63 enclose the HTH lysR-type domain; that stretch reads PSLNALRAFEAAARLHSISLAAEELHVTHGAVSRQVRLLEDDLGVALFGKDGRGVKLT. Residues 23–42 constitute a DNA-binding region (H-T-H motif); that stretch reads ISLAAEELHVTHGAVSRQVR.

Belongs to the LysR transcriptional regulatory family. In terms of assembly, homotetramer.

Activates the expression of the trpBA genes, which encode the two tryptophan synthase subunits, and represses initiation at its own promoter. Acts by binding to two adjacent sites in the intergenic region. In the absence of the inducer indoleglycerol phosphate (InGP), TrpI binds to site I. In the presence of InGP, TrpI binds to site I and site II. Binding to site II is site I dependent. InGP strongly stimulates binding to site II and is required for maximal activation of trpBA. This Pseudomonas aeruginosa (strain ATCC 15692 / DSM 22644 / CIP 104116 / JCM 14847 / LMG 12228 / 1C / PRS 101 / PAO1) protein is HTH-type transcriptional regulator TrpI.